Reading from the N-terminus, the 603-residue chain is ATP-dependent lipid A-core flippase (603 aa).

A run of 4 helical transmembrane segments spans residues 20–40 (LGYVKPYIGMFLLSIVGFLIF), 79–99 (LVYAVPLLIILIAAWQGLGSF), 170–190 (VFLFLYLLWMNWKLTLVMLAI), and 269–289 (PMLQLVIYVAMAILMFLVLWL). The 294-residue stretch at 31 to 324 (LLSIVGFLIF…LSEVSSTVQR (294 aa)) folds into the ABC transmembrane type-1 domain. One can recognise an ABC transporter domain in the interval 356 to 592 (LEVRNLSFRY…NGHYARLHAM (237 aa)). 390–397 (GRSGSGKS) provides a ligand contact to ATP.

Belongs to the ABC transporter superfamily. Lipid exporter (TC 3.A.1.106) family. As to quaternary structure, homodimer.

It localises to the cell inner membrane. The enzyme catalyses ATP + H2O + lipid A-core oligosaccharideSide 1 = ADP + phosphate + lipid A-core oligosaccharideSide 2.. Its function is as follows. Involved in lipopolysaccharide (LPS) biosynthesis. Translocates lipid A-core from the inner to the outer leaflet of the inner membrane. Transmembrane domains (TMD) form a pore in the inner membrane and the ATP-binding domain (NBD) is responsible for energy generation. The protein is ATP-dependent lipid A-core flippase of Pseudomonas aeruginosa (strain ATCC 15692 / DSM 22644 / CIP 104116 / JCM 14847 / LMG 12228 / 1C / PRS 101 / PAO1).